A 348-amino-acid chain; its full sequence is Ferrochelatase (348 aa).

Residues histidine 218 and glutamate 299 each contribute to the Fe cation site.

The protein belongs to the ferrochelatase family.

Its subcellular location is the cytoplasm. The enzyme catalyses heme b + 2 H(+) = protoporphyrin IX + Fe(2+). Its pathway is porphyrin-containing compound metabolism; protoheme biosynthesis; protoheme from protoporphyrin-IX: step 1/1. Catalyzes the ferrous insertion into protoporphyrin IX. This chain is Ferrochelatase, found in Methylocella silvestris (strain DSM 15510 / CIP 108128 / LMG 27833 / NCIMB 13906 / BL2).